Reading from the N-terminus, the 316-residue chain is GMP reductase (316 aa).

The Thioimidate intermediate role is filled by C175. NADP(+) is bound at residue 202 to 225; sequence VIADGGIVEHGDIAKALVCGATMV.

Belongs to the IMPDH/GMPR family. GuaC type 2 subfamily.

It carries out the reaction IMP + NH4(+) + NADP(+) = GMP + NADPH + 2 H(+). In terms of biological role, catalyzes the irreversible NADPH-dependent deamination of GMP to IMP. It functions in the conversion of nucleobase, nucleoside and nucleotide derivatives of G to A nucleotides, and in maintaining the intracellular balance of A and G nucleotides. This chain is GMP reductase, found in Chromobacterium violaceum (strain ATCC 12472 / DSM 30191 / JCM 1249 / CCUG 213 / NBRC 12614 / NCIMB 9131 / NCTC 9757 / MK).